A 319-amino-acid polypeptide reads, in one-letter code: Ribose-phosphate pyrophosphokinase (319 aa).

Residues aspartate 40–glutamate 42 and arginine 99–glutamine 100 each bind ATP. Residues histidine 134 and aspartate 174 each coordinate Mg(2+). Residue lysine 198 is part of the active site. Residues arginine 200, aspartate 224, and aspartate 228–threonine 232 each bind D-ribose 5-phosphate.

The protein belongs to the ribose-phosphate pyrophosphokinase family. Class I subfamily. Homohexamer. Mg(2+) serves as cofactor.

It is found in the cytoplasm. It carries out the reaction D-ribose 5-phosphate + ATP = 5-phospho-alpha-D-ribose 1-diphosphate + AMP + H(+). Its pathway is metabolic intermediate biosynthesis; 5-phospho-alpha-D-ribose 1-diphosphate biosynthesis; 5-phospho-alpha-D-ribose 1-diphosphate from D-ribose 5-phosphate (route I): step 1/1. In terms of biological role, involved in the biosynthesis of the central metabolite phospho-alpha-D-ribosyl-1-pyrophosphate (PRPP) via the transfer of pyrophosphoryl group from ATP to 1-hydroxyl of ribose-5-phosphate (Rib-5-P). This Xanthomonas axonopodis pv. citri (strain 306) protein is Ribose-phosphate pyrophosphokinase.